The sequence spans 458 residues: tRNA modification GTPase MnmE (458 aa).

3 residues coordinate (6S)-5-formyl-5,6,7,8-tetrahydrofolate: R22, E84, and R123. Positions 220-379 (GIATAIIGRP…LEKAIADLFF (160 aa)) constitute a TrmE-type G domain. N230 provides a ligand contact to K(+). GTP is bound by residues 230–235 (NVGKSS), 249–255 (TDIAGTT), and 274–277 (DTAG). S234 is a binding site for Mg(2+). Positions 249, 251, and 254 each coordinate K(+). Mg(2+) is bound at residue T255. K458 serves as a coordination point for (6S)-5-formyl-5,6,7,8-tetrahydrofolate.

It belongs to the TRAFAC class TrmE-Era-EngA-EngB-Septin-like GTPase superfamily. TrmE GTPase family. In terms of assembly, homodimer. Heterotetramer of two MnmE and two MnmG subunits. The cofactor is K(+).

The protein localises to the cytoplasm. Functionally, exhibits a very high intrinsic GTPase hydrolysis rate. Involved in the addition of a carboxymethylaminomethyl (cmnm) group at the wobble position (U34) of certain tRNAs, forming tRNA-cmnm(5)s(2)U34. This is tRNA modification GTPase MnmE from Bacillus cereus (strain ATCC 14579 / DSM 31 / CCUG 7414 / JCM 2152 / NBRC 15305 / NCIMB 9373 / NCTC 2599 / NRRL B-3711).